The sequence spans 282 residues: 2-dehydro-3-deoxyphosphooctonate aldolase (282 aa).

It belongs to the KdsA family.

It localises to the cytoplasm. It carries out the reaction D-arabinose 5-phosphate + phosphoenolpyruvate + H2O = 3-deoxy-alpha-D-manno-2-octulosonate-8-phosphate + phosphate. It functions in the pathway carbohydrate biosynthesis; 3-deoxy-D-manno-octulosonate biosynthesis; 3-deoxy-D-manno-octulosonate from D-ribulose 5-phosphate: step 2/3. It participates in bacterial outer membrane biogenesis; lipopolysaccharide biosynthesis. In Bradyrhizobium diazoefficiens (strain JCM 10833 / BCRC 13528 / IAM 13628 / NBRC 14792 / USDA 110), this protein is 2-dehydro-3-deoxyphosphooctonate aldolase.